The following is a 492-amino-acid chain: UDP-N-acetylmuramate--L-alanine ligase (492 aa).

An ATP-binding site is contributed by 126–132; the sequence is GTHGKTT.

The protein belongs to the MurCDEF family.

It localises to the cytoplasm. It carries out the reaction UDP-N-acetyl-alpha-D-muramate + L-alanine + ATP = UDP-N-acetyl-alpha-D-muramoyl-L-alanine + ADP + phosphate + H(+). It participates in cell wall biogenesis; peptidoglycan biosynthesis. In terms of biological role, cell wall formation. This chain is UDP-N-acetylmuramate--L-alanine ligase, found in Serratia proteamaculans (strain 568).